The following is a 107-amino-acid chain: U1-lycotoxin-Ls1i (107 aa).

The N-terminal stretch at 1–20 is a signal peptide; sequence MMKVLVVVALLVTLISYSSS. A propeptide spanning residues 21-41 is cleaved from the precursor; it reads EGIDDLEADELLSLMANEQTR. Disulfide bonds link C44–C59, C51–C68, C58–C86, and C70–C84.

It belongs to the neurotoxin 19 (CSTX) family. 04 (U1-Lctx) subfamily. As to expression, expressed by the venom gland.

The protein localises to the secreted. The chain is U1-lycotoxin-Ls1i from Lycosa singoriensis (Wolf spider).